The chain runs to 404 residues: Tryptophan synthase beta chain (404 aa).

K95 carries the N6-(pyridoxal phosphate)lysine modification.

Belongs to the TrpB family. As to quaternary structure, tetramer of two alpha and two beta chains. Pyridoxal 5'-phosphate serves as cofactor.

The catalysed reaction is (1S,2R)-1-C-(indol-3-yl)glycerol 3-phosphate + L-serine = D-glyceraldehyde 3-phosphate + L-tryptophan + H2O. The protein operates within amino-acid biosynthesis; L-tryptophan biosynthesis; L-tryptophan from chorismate: step 5/5. The beta subunit is responsible for the synthesis of L-tryptophan from indole and L-serine. This is Tryptophan synthase beta chain (trpB) from Thermus thermophilus (strain ATCC BAA-163 / DSM 7039 / HB27).